The following is a 328-amino-acid chain: tRNA dimethylallyltransferase (328 aa).

10–17 (GPTASGKT) contributes to the ATP binding site. 12-17 (TASGKT) provides a ligand contact to substrate.

This sequence belongs to the IPP transferase family. Monomer. It depends on Mg(2+) as a cofactor.

The catalysed reaction is adenosine(37) in tRNA + dimethylallyl diphosphate = N(6)-dimethylallyladenosine(37) in tRNA + diphosphate. In terms of biological role, catalyzes the transfer of a dimethylallyl group onto the adenine at position 37 in tRNAs that read codons beginning with uridine, leading to the formation of N6-(dimethylallyl)adenosine (i(6)A). The chain is tRNA dimethylallyltransferase from Bifidobacterium longum subsp. infantis (strain ATCC 15697 / DSM 20088 / JCM 1222 / NCTC 11817 / S12).